We begin with the raw amino-acid sequence, 315 residues long: THO complex subunit 3 (315 aa).

WD repeat units follow at residues 18–57, 64–104, 106–145, 189–228, 231–270, and 272–311; these read GHKK…HSKA, GHTD…CTQQ, ELSG…PLHR, AHTA…CLRT, KLEW…TVHQ, and PCRA…RIFG.

This sequence belongs to the THOC3 family. Component of the THO complex, which is composed of THO1, THO2, THO3, THO5, THO6 and THO7.

The protein localises to the nucleus. Acts as a component of the THO subcomplex of the TREX complex which is thought to couple mRNA transcription, processing and nuclear export. Contributes to the integrity of the endogenous trans-acting small interfering RNA (ta-siRNA) pathway. May process or transport a long RNA molecule so that it can be a template for secondary siRNA production. May participate in the trafficking of siRNA precursors to the ARGONAUTE catalytic center. Required for the generation of functional messenger ribonucleoproteins (mRNPs). This Arabidopsis thaliana (Mouse-ear cress) protein is THO complex subunit 3 (THO3).